Here is a 244-residue protein sequence, read N- to C-terminus: Carboxy-S-adenosyl-L-methionine synthase (244 aa).

S-adenosyl-L-methionine contacts are provided by residues Tyr40, 65-67 (GCS), 90-91 (DN), 119-120 (DI), Asn134, and Arg201.

Belongs to the class I-like SAM-binding methyltransferase superfamily. Cx-SAM synthase family. In terms of assembly, homodimer.

It carries out the reaction prephenate + S-adenosyl-L-methionine = carboxy-S-adenosyl-L-methionine + 3-phenylpyruvate + H2O. In terms of biological role, catalyzes the conversion of S-adenosyl-L-methionine (SAM) to carboxy-S-adenosyl-L-methionine (Cx-SAM). This chain is Carboxy-S-adenosyl-L-methionine synthase, found in Geobacter sp. (strain M21).